Consider the following 450-residue polypeptide: UDP-N-acetylmuramoylalanine--D-glutamate ligase (450 aa).

119–125 contacts ATP; it reads GSNGKTT.

This sequence belongs to the MurCDEF family.

The protein resides in the cytoplasm. The catalysed reaction is UDP-N-acetyl-alpha-D-muramoyl-L-alanine + D-glutamate + ATP = UDP-N-acetyl-alpha-D-muramoyl-L-alanyl-D-glutamate + ADP + phosphate + H(+). It functions in the pathway cell wall biogenesis; peptidoglycan biosynthesis. Functionally, cell wall formation. Catalyzes the addition of glutamate to the nucleotide precursor UDP-N-acetylmuramoyl-L-alanine (UMA). This Streptococcus pneumoniae serotype 19F (strain G54) protein is UDP-N-acetylmuramoylalanine--D-glutamate ligase.